We begin with the raw amino-acid sequence, 65 residues long: Defensin-B3 (65 aa).

The N-terminal stretch at 1-21 (MRLLLVFFFLSLLDQAPPARS) is a signal peptide. 3 disulfides stabilise this stretch: C29/C58, C36/C50, and C40/C59. The propeptide occupies 62-65 (ESPR).

This sequence belongs to the beta-defensin family. In terms of tissue distribution, lowly expressed in spleen, and expressed at lower levels in kidney, lung and testis.

Its subcellular location is the secreted. In terms of biological role, has antimicrobial activity. The chain is Defensin-B3 from Ornithorhynchus anatinus (Duckbill platypus).